The sequence spans 433 residues: Alpha-(1-&gt;3)-arabinofuranosyltransferase (433 aa).

A run of 10 helical transmembrane segments spans residues 118 to 138 (LFIS…LRMF), 140 to 160 (FTLT…TETV), 164 to 184 (LVFT…LRWL), 197 to 217 (LAIG…LLPL), 224 to 244 (ALVA…PLVS), 280 to 300 (WLIL…LWLL), 310 to 330 (LFWF…VMSL), 333 to 353 (GYYS…NSVI), 356 to 376 (WPAW…LFNW), and 385 to 405 (YLKI…VLYF).

The protein belongs to the glycosyltransferase 87 family.

It localises to the cell membrane. The enzyme catalyses Adds an alpha-D-arabinofuranosyl group from trans,octacis-decaprenylphospho-beta-D-arabinofuranose at the 3-O-position of an alpha-(1-&gt;5)-arabinofuranan chain attached to a beta-(1-&gt;5)-galactofuranan chain.. Its pathway is cell wall biogenesis; cell wall polysaccharide biosynthesis. In terms of biological role, involved in the biosynthesis of the arabinogalactan (AG) region of the mycolylarabinogalactan-peptidoglycan (mAGP) complex, an essential component of the mycobacterial cell wall. Catalyzes the addition of an arabinofuranosyl (Araf) residue from the sugar donor beta-D-arabinofuranosyl-1-monophosphoryldecaprenol (DPA) on the C-3 of an alpha-(1-&gt;5)-linked Araf from the arabinan backbone of AG. The chain is Alpha-(1-&gt;3)-arabinofuranosyltransferase (aftC) from Mycobacterium tuberculosis (strain CDC 1551 / Oshkosh).